The sequence spans 142 residues: Large ribosomal subunit protein uL11 (142 aa).

Belongs to the universal ribosomal protein uL11 family. Part of the ribosomal stalk of the 50S ribosomal subunit. Interacts with L10 and the large rRNA to form the base of the stalk. L10 forms an elongated spine to which L12 dimers bind in a sequential fashion forming a multimeric L10(L12)X complex. One or more lysine residues are methylated.

Forms part of the ribosomal stalk which helps the ribosome interact with GTP-bound translation factors. The sequence is that of Large ribosomal subunit protein uL11 from Xylella fastidiosa (strain Temecula1 / ATCC 700964).